Consider the following 442-residue polypeptide: Histidine--tRNA ligase (442 aa).

The protein belongs to the class-II aminoacyl-tRNA synthetase family. In terms of assembly, homodimer.

It is found in the cytoplasm. The catalysed reaction is tRNA(His) + L-histidine + ATP = L-histidyl-tRNA(His) + AMP + diphosphate + H(+). This is Histidine--tRNA ligase (hisS) from Helicobacter pylori (strain J99 / ATCC 700824) (Campylobacter pylori J99).